The sequence spans 335 residues: Methionine import ATP-binding protein MetN 1 (335 aa).

In terms of domain architecture, ABC transporter spans 2-242; that stretch reads IEFQNVHKTY…PKHPTTKRFV (241 aa). Residue 38–45 coordinates ATP; that stretch reads GHSGAGKS.

Belongs to the ABC transporter superfamily. Methionine importer (TC 3.A.1.24) family. As to quaternary structure, the complex is composed of two ATP-binding proteins (MetN), two transmembrane proteins (MetI) and a solute-binding protein (MetQ).

The protein resides in the cell inner membrane. The enzyme catalyses L-methionine(out) + ATP + H2O = L-methionine(in) + ADP + phosphate + H(+). The catalysed reaction is D-methionine(out) + ATP + H2O = D-methionine(in) + ADP + phosphate + H(+). Its function is as follows. Part of the ABC transporter complex MetNIQ involved in methionine import. Responsible for energy coupling to the transport system. The protein is Methionine import ATP-binding protein MetN 1 of Pseudomonas fluorescens (strain Pf0-1).